A 562-amino-acid polypeptide reads, in one-letter code: Arginine--tRNA ligase (562 aa).

The 'HIGH' region signature appears at 121 to 131 (PNIAKPFSVGH).

It belongs to the class-I aminoacyl-tRNA synthetase family. Monomer.

It localises to the cytoplasm. It carries out the reaction tRNA(Arg) + L-arginine + ATP = L-arginyl-tRNA(Arg) + AMP + diphosphate. The sequence is that of Arginine--tRNA ligase from Streptococcus uberis (strain ATCC BAA-854 / 0140J).